The primary structure comprises 312 residues: Ribose-phosphate pyrophosphokinase (312 aa).

ATP-binding positions include aspartate 38–glutamate 40 and arginine 97–glutamine 98. Mg(2+) contacts are provided by histidine 131 and aspartate 170. Lysine 193 is an active-site residue. Residues arginine 195, aspartate 219, and aspartate 223 to threonine 227 contribute to the D-ribose 5-phosphate site.

The protein belongs to the ribose-phosphate pyrophosphokinase family. Class I subfamily. As to quaternary structure, homohexamer. Mg(2+) is required as a cofactor.

The protein localises to the cytoplasm. The enzyme catalyses D-ribose 5-phosphate + ATP = 5-phospho-alpha-D-ribose 1-diphosphate + AMP + H(+). Its pathway is metabolic intermediate biosynthesis; 5-phospho-alpha-D-ribose 1-diphosphate biosynthesis; 5-phospho-alpha-D-ribose 1-diphosphate from D-ribose 5-phosphate (route I): step 1/1. Functionally, involved in the biosynthesis of the central metabolite phospho-alpha-D-ribosyl-1-pyrophosphate (PRPP) via the transfer of pyrophosphoryl group from ATP to 1-hydroxyl of ribose-5-phosphate (Rib-5-P). This chain is Ribose-phosphate pyrophosphokinase, found in Leptospira interrogans serogroup Icterohaemorrhagiae serovar copenhageni (strain Fiocruz L1-130).